The sequence spans 46 residues: Light-harvesting protein B-800/850 beta 1 chain (46 aa).

Over alanine 2–aspartate 19 the chain is Cytoplasmic. A bacteriochlorophyll contacts are provided by histidine 18 and histidine 36. Residues glutamine 20–tryptophan 42 traverse the membrane as a helical segment. Topologically, residues lysine 43 to phenylalanine 46 are periplasmic.

It belongs to the antenna complex beta subunit family. As to quaternary structure, the core complex is formed by different alpha and beta chains, binding bacteriochlorophyll molecules, and arranged most probably in tetrameric structures disposed around the reaction center.

Its subcellular location is the cell inner membrane. Its function is as follows. Antenna complexes are light-harvesting systems, which transfer the excitation energy to the reaction centers. In Magnetospirillum molischianum (Rhodospirillum molischianum), this protein is Light-harvesting protein B-800/850 beta 1 chain (B1).